The following is a 121-amino-acid chain: MKYLFVCVSLALFAYISANPAYGGNRGGYGGGYGNDRVEYEQILVPSYGRSRGGYGGYDRPQILRSAPSGSRASAAAASAAAAIAPGSYSQYAIPRYEIDGSYNGPSHGHGGYGHGGRGGY.

The N-terminal stretch at 1 to 18 (MKYLFVCVSLALFAYISA) is a signal peptide.

Belongs to the chorion protein S15/S18 family.

The protein localises to the secreted. In terms of biological role, chorion membrane (egg shell) protein; plays a role in protecting the egg from the environment. This is Chorion protein S15 (Cp15) from Drosophila subobscura (Fruit fly).